Here is a 272-residue protein sequence, read N- to C-terminus: MKNIRHIYYVSENTGLLAKDSGKSLLCQFPGVEFQEELLPFIRTKDDAQRTINAIREKCGEEKPIIFSTIFDPEINKILQHEDVILLNICEPFLTQLEGMLGKNALRASGHSRNVDQQIMSNRVDAIHYTISHDDGTAIMDYEEADLIIVGVSRSGKTPISVFLATQMGIKTANYPLVEQDLTFCQLPEDIIKNKHKVVGLSISPDVLHTFREQRYKGSHYAQMSTCKRETLQSKRIFEKYDLPVVFSDARSIEETATQVAQELSKQWNPIF.

An ADP-binding site is contributed by 151 to 158 (GVSRSGKT).

This sequence belongs to the pyruvate, phosphate/water dikinase regulatory protein family. PSRP subfamily.

It carries out the reaction [pyruvate, water dikinase] + ADP = [pyruvate, water dikinase]-phosphate + AMP + H(+). It catalyses the reaction [pyruvate, water dikinase]-phosphate + phosphate + H(+) = [pyruvate, water dikinase] + diphosphate. In terms of biological role, bifunctional serine/threonine kinase and phosphorylase involved in the regulation of the phosphoenolpyruvate synthase (PEPS) by catalyzing its phosphorylation/dephosphorylation. The sequence is that of Putative phosphoenolpyruvate synthase regulatory protein from Desulfotalea psychrophila (strain LSv54 / DSM 12343).